We begin with the raw amino-acid sequence, 284 residues long: 2-dehydro-3-deoxyphosphooctonate aldolase (284 aa).

It belongs to the KdsA family.

It is found in the cytoplasm. It carries out the reaction D-arabinose 5-phosphate + phosphoenolpyruvate + H2O = 3-deoxy-alpha-D-manno-2-octulosonate-8-phosphate + phosphate. Its pathway is carbohydrate biosynthesis; 3-deoxy-D-manno-octulosonate biosynthesis; 3-deoxy-D-manno-octulosonate from D-ribulose 5-phosphate: step 2/3. The protein operates within bacterial outer membrane biogenesis; lipopolysaccharide biosynthesis. This is 2-dehydro-3-deoxyphosphooctonate aldolase from Salmonella arizonae (strain ATCC BAA-731 / CDC346-86 / RSK2980).